The following is a 299-amino-acid chain: MSQSKRLRIAIQKSGRLSKESQQLLKSCGVKFNVNEQRLIAHADNMPIDLLRVRDDDIPGLVMDGVVDLGIIGENVLEEEQIERQLAGKPAECTKLRELDFGSCRLSLAVPNEFEYKDANSLEGLRIATSYPNLLRRFMQEKGINYSDCMLKGSVEVAPRAGLSDGICDLVSTGATLEANGLYETEVIYRSMACIIQSNKTQSTEKQALINKILSRINGVIRARESKYILLHAPVETLDQIVALLPGAENPTVLPLNDDTNRVAIHVVSTEDLFWDTMEELTALGASSILVMPIEKMMG.

This sequence belongs to the ATP phosphoribosyltransferase family. Long subfamily. It depends on Mg(2+) as a cofactor.

It localises to the cytoplasm. The catalysed reaction is 1-(5-phospho-beta-D-ribosyl)-ATP + diphosphate = 5-phospho-alpha-D-ribose 1-diphosphate + ATP. It functions in the pathway amino-acid biosynthesis; L-histidine biosynthesis; L-histidine from 5-phospho-alpha-D-ribose 1-diphosphate: step 1/9. With respect to regulation, feedback inhibited by histidine. In terms of biological role, catalyzes the condensation of ATP and 5-phosphoribose 1-diphosphate to form N'-(5'-phosphoribosyl)-ATP (PR-ATP). Has a crucial role in the pathway because the rate of histidine biosynthesis seems to be controlled primarily by regulation of HisG enzymatic activity. In Shewanella frigidimarina (strain NCIMB 400), this protein is ATP phosphoribosyltransferase.